We begin with the raw amino-acid sequence, 127 residues long: Glycine cleavage system H protein (127 aa).

One can recognise a Lipoyl-binding domain in the interval 24–105; sequence TALVGITDFA…YEDGWMVKVS (82 aa). Lysine 65 is subject to N6-lipoyllysine.

Belongs to the GcvH family. In terms of assembly, the glycine cleavage system is composed of four proteins: P, T, L and H. (R)-lipoate serves as cofactor.

Functionally, the glycine cleavage system catalyzes the degradation of glycine. The H protein shuttles the methylamine group of glycine from the P protein to the T protein. This Prosthecochloris aestuarii (strain DSM 271 / SK 413) protein is Glycine cleavage system H protein.